We begin with the raw amino-acid sequence, 240 residues long: Uridylate kinase (240 aa).

Residue 13 to 16 (KLSG) participates in ATP binding. The interval 21 to 26 (GEQGYG) is involved in allosteric activation by GTP. Gly55 provides a ligand contact to UMP. Positions 56 and 60 each coordinate ATP. Residues Asp75 and 137–144 (TGNPFFST) contribute to the UMP site. Thr164, Tyr170, and Asp173 together coordinate ATP.

This sequence belongs to the UMP kinase family. In terms of assembly, homohexamer.

Its subcellular location is the cytoplasm. The enzyme catalyses UMP + ATP = UDP + ADP. It participates in pyrimidine metabolism; CTP biosynthesis via de novo pathway; UDP from UMP (UMPK route): step 1/1. With respect to regulation, allosterically activated by GTP. Inhibited by UTP. Catalyzes the reversible phosphorylation of UMP to UDP. This chain is Uridylate kinase, found in Aquifex aeolicus (strain VF5).